The sequence spans 363 residues: Ribosome-binding ATPase YchF (363 aa).

The OBG-type G domain maps to Phe3–Met256. Asn12–Thr17 provides a ligand contact to ATP. Mg(2+) is bound by residues Ser16 and Thr36. In terms of domain architecture, TGS spans Asn278–Phe361.

Belongs to the TRAFAC class OBG-HflX-like GTPase superfamily. OBG GTPase family. YchF/OLA1 subfamily. It depends on Mg(2+) as a cofactor.

Its function is as follows. ATPase that binds to both the 70S ribosome and the 50S ribosomal subunit in a nucleotide-independent manner. In Escherichia coli O157:H7, this protein is Ribosome-binding ATPase YchF.